A 127-amino-acid polypeptide reads, in one-letter code: Large ribosomal subunit protein bL12 (127 aa).

The protein belongs to the bacterial ribosomal protein bL12 family. Homodimer. Part of the ribosomal stalk of the 50S ribosomal subunit. Forms a multimeric L10(L12)X complex, where L10 forms an elongated spine to which 2 to 4 L12 dimers bind in a sequential fashion. Binds GTP-bound translation factors.

In terms of biological role, forms part of the ribosomal stalk which helps the ribosome interact with GTP-bound translation factors. Is thus essential for accurate translation. The polypeptide is Large ribosomal subunit protein bL12 (Streptomyces avermitilis (strain ATCC 31267 / DSM 46492 / JCM 5070 / NBRC 14893 / NCIMB 12804 / NRRL 8165 / MA-4680)).